A 423-amino-acid chain; its full sequence is Acetylornithine aminotransferase, mitochondrial (423 aa).

A mitochondrion-targeting transit peptide spans 1 to 13; the sequence is MFKRYLSSTSSRR. The residue at position 276 (Lys276) is an N6-(pyridoxal phosphate)lysine.

This sequence belongs to the class-III pyridoxal-phosphate-dependent aminotransferase family. Requires pyridoxal 5'-phosphate as cofactor.

The protein localises to the mitochondrion matrix. The catalysed reaction is N(2)-acetyl-L-ornithine + 2-oxoglutarate = N-acetyl-L-glutamate 5-semialdehyde + L-glutamate. It participates in amino-acid biosynthesis; L-arginine biosynthesis; N(2)-acetyl-L-ornithine from L-glutamate: step 4/4. Catalyzes the conversion of N-acetylglutamate-gamma-semialdehyde (NAGSA) to N-acetylornithine in arginine biosynthesis. This chain is Acetylornithine aminotransferase, mitochondrial (ARG8), found in Saccharomyces cerevisiae (strain ATCC 204508 / S288c) (Baker's yeast).